Consider the following 85-residue polypeptide: Small integral membrane protein 35 (85 aa).

Residues 7–27 form a helical membrane-spanning segment; it reads ISTLGMILGVGLSLLLVSILG.

It is found in the membrane. The chain is Small integral membrane protein 35 from Mus musculus (Mouse).